Reading from the N-terminus, the 331-residue chain is Olfactory receptor 7D11 (331 aa).

At 1–25 (MEIENHTLITKFLILGLSDDPELQP) the chain is on the extracellular side. The N-linked (GlcNAc...) asparagine glycan is linked to asparagine 5. The helical transmembrane segment at 26 to 46 (ILFGLFLSMYLVTLLGNLLII) threads the bilayer. Residues 47–57 (LAVSSDSHLHK) lie on the Cytoplasmic side of the membrane. A helical transmembrane segment spans residues 58 to 78 (PMYFLLSNLSFIDICFISTTI). The Extracellular portion of the chain corresponds to 79 to 97 (PKMLVNMQSQIKDISYIEC). Cysteine 97 and cysteine 179 are disulfide-bonded. The helical transmembrane segment at 98 to 118 (LTQVFFFNIFAGMDNFLLTLM) threads the bilayer. The Cytoplasmic segment spans residues 119–142 (AYDRFVAICHPLNYTVIMNPRLCA). Residues 143–163 (LLILMFWIIMFWVSLIHVLLM) form a helical membrane-spanning segment. Residues 164–196 (NELNFSRGTEIPHFFCELAQVLKVSNSDNHVNN) lie on the Extracellular side of the membrane. Asparagine 167 carries N-linked (GlcNAc...) asparagine glycosylation. Residues 197-217 (VFMYVVTSLLGVIPMTGILMS) form a helical membrane-spanning segment. The Cytoplasmic portion of the chain corresponds to 218 to 244 (YSQIFSSLFRMSSTVSKYKAFSTCGSH). The helical transmembrane segment at 245–265 (LCVVTLFYGSGFGVYFSSSVV) threads the bilayer. Topologically, residues 266-271 (HSTQRR) are extracellular. The helical transmembrane segment at 272 to 292 (KVASLMYTVISPMLNPFIYTL) threads the bilayer. Residues 293-331 (RNKDVKGALGKLFNRVASSPSCINDIRNKLLLRSVRQIL) lie on the Cytoplasmic side of the membrane.

The protein belongs to the G-protein coupled receptor 1 family.

The protein resides in the cell membrane. Functionally, possible olfactory or taste receptor. The sequence is that of Olfactory receptor 7D11 from Mus musculus (Mouse).